The sequence spans 127 residues: Fluoride-specific ion channel FluC (127 aa).

4 helical membrane passes run 4 to 24 (LLLAVFIGGGTGSVARWLLSM), 35 to 55 (LGTLTANLIGAFIIGMGFAWF), 71 to 91 (TGFCGGLTTFSTFSAEVVFLL), and 103 to 123 (VFVNLLGSFAMTALAFWLFSA). Na(+) contacts are provided by G75 and T78.

This sequence belongs to the fluoride channel Fluc/FEX (TC 1.A.43) family.

Its subcellular location is the cell inner membrane. It catalyses the reaction fluoride(in) = fluoride(out). Na(+) is not transported, but it plays an essential structural role and its presence is essential for fluoride channel function. Fluoride-specific ion channel. Important for reducing fluoride concentration in the cell, thus reducing its toxicity. In Escherichia coli O7:K1 (strain IAI39 / ExPEC), this protein is Fluoride-specific ion channel FluC.